The chain runs to 282 residues: Predicted GPI-anchored protein 23 (282 aa).

Residues M1–A18 form the signal peptide. Residues G163–M264 form a disordered region. N-linked (GlcNAc...) asparagine glycosylation is found at N180, N192, and N257. The span at G186–S216 shows a compositional bias: gly residues. The span at L236–M264 shows a compositional bias: low complexity. The GPI-anchor amidated serine moiety is linked to residue S259. The propeptide at S260–I282 is removed in mature form.

It localises to the cell membrane. In terms of biological role, probable cell surface protein involved in the process of adhesion and early events of invasion. The protein is Predicted GPI-anchored protein 23 (PGA23) of Candida albicans (strain SC5314 / ATCC MYA-2876) (Yeast).